The primary structure comprises 94 residues: Large ribosomal subunit protein uL23 (94 aa).

This sequence belongs to the universal ribosomal protein uL23 family. As to quaternary structure, part of the 50S ribosomal subunit. Contacts protein L29, and trigger factor when it is bound to the ribosome.

One of the early assembly proteins it binds 23S rRNA. One of the proteins that surrounds the polypeptide exit tunnel on the outside of the ribosome. Forms the main docking site for trigger factor binding to the ribosome. The sequence is that of Large ribosomal subunit protein uL23 from Ligilactobacillus salivarius (strain UCC118) (Lactobacillus salivarius).